The primary structure comprises 318 residues: Myoblast determination protein 1 (318 aa).

Met-1 is covalently cross-linked (Peptide (Met-Gly) (interchain with G-Cter in ubiquitin)). An N6-methyllysine; by EHMT2 modification is found at Lys-104. One can recognise a bHLH domain in the interval 109–160 (DRRKAATMRERRRLSKVNEAFETLKRCTSSNPNQRLPKVEILRNAIRYIEGL). Disordered regions lie at residues 175–224 (AAFY…RQNG) and 262–318 (SPAA…YQVL). Over residues 196 to 206 (SDASSPRSNCS) the composition is skewed to polar residues. Over residues 262-271 (SPAAPSLLLP) the composition is skewed to low complexity. Pro residues predominate over residues 272–282 (DAPPESPPGPP). The span at 290–304 (AEQGTQTPSPDSTPQ) shows a compositional bias: polar residues.

As to quaternary structure, efficient DNA binding requires dimerization with another bHLH protein. Seems to form active heterodimers with ITF-2. Interacts with SUV39H1. Interacts with DDX5. Interacts with CHD2. Interacts with TSC22D3. Interacts with SETD3. Interacts with P-TEFB complex; promotes the transcriptional activity of MYOD1 through its CDK9-mediated phosphorylation. Interacts with CSRP3. Interacts with NUPR1. Post-translationally, phosphorylated by CDK9. This phosphorylation promotes its function in muscle differentiation. In terms of processing, acetylated by a complex containing EP300 and PCAF. The acetylation is essential to activate target genes. Conversely, its deacetylation by SIRT1 inhibits its function. Ubiquitinated on the N-terminus; which is required for proteasomal degradation. Post-translationally, methylation at Lys-104 by EHMT2/G9a inhibits myogenic activity.

It localises to the nucleus. Acts as a transcriptional activator that promotes transcription of muscle-specific target genes and plays a role in muscle differentiation. Together with MYF5 and MYOG, co-occupies muscle-specific gene promoter core region during myogenesis. Induces fibroblasts to differentiate into myoblasts. Interacts with and is inhibited by the twist protein. This interaction probably involves the basic domains of both proteins. This chain is Myoblast determination protein 1 (Myod1), found in Rattus norvegicus (Rat).